A 428-amino-acid chain; its full sequence is tRNA modification GTPase MnmE (428 aa).

Residues Arg-20, Glu-76, and Arg-116 each coordinate (6S)-5-formyl-5,6,7,8-tetrahydrofolate. The region spanning 212–351 (GFEVAIIGAP…LVEALQDRLL (140 aa)) is the TrmE-type G domain. Asn-222 is a K(+) binding site. GTP-binding positions include 222-227 (NAGKST), 241-247 (SEVAGTT), and 266-269 (DTAG). A Mg(2+)-binding site is contributed by Ser-226. Residues Ser-241, Val-243, and Thr-246 each contribute to the K(+) site. Thr-247 is a Mg(2+) binding site. Residue Lys-428 coordinates (6S)-5-formyl-5,6,7,8-tetrahydrofolate.

This sequence belongs to the TRAFAC class TrmE-Era-EngA-EngB-Septin-like GTPase superfamily. TrmE GTPase family. In terms of assembly, homodimer. Heterotetramer of two MnmE and two MnmG subunits. Requires K(+) as cofactor.

The protein localises to the cytoplasm. Its function is as follows. Exhibits a very high intrinsic GTPase hydrolysis rate. Involved in the addition of a carboxymethylaminomethyl (cmnm) group at the wobble position (U34) of certain tRNAs, forming tRNA-cmnm(5)s(2)U34. This Cereibacter sphaeroides (strain ATCC 17025 / ATH 2.4.3) (Rhodobacter sphaeroides) protein is tRNA modification GTPase MnmE.